The following is a 324-amino-acid chain: Protein FAM228B (324 aa).

Belongs to the FAM228 family.

The chain is Protein FAM228B (FAM228B) from Homo sapiens (Human).